The sequence spans 215 residues: HTH-type transcriptional repressor FabR (215 aa).

Residues 10–70 (KTRRSLVEAA…TMVDESGLML (61 aa)) enclose the HTH tetR-type domain. A DNA-binding region (H-T-H motif) is located at residues 33 to 52 (SLREVAREAGIAPTSFYRHF).

Homodimer.

Its subcellular location is the cytoplasm. In terms of biological role, represses the transcription of fabB, involved in unsaturated fatty acid (UFA) biosynthesis. By controlling UFA production, FabR directly influences the physical properties of the membrane bilayer. This is HTH-type transcriptional repressor FabR from Escherichia coli O1:K1 / APEC.